A 68-amino-acid polypeptide reads, in one-letter code: Conotoxin Lt5.2 (68 aa).

An N-terminal signal peptide occupies residues 1–19; that stretch reads MLCLPVFIILLLLASPAAP. A propeptide spanning residues 20-54 is cleaved from the precursor; sequence KSLETRIQNDLIRAGLTDADLKTEKGFLSGLLNVA.

The protein belongs to the conotoxin T superfamily. Contains 2 disulfide bonds that can be either 'C1-C3, C2-C4' or 'C1-C4, C2-C3', since these disulfide connectivities have been observed for conotoxins with cysteine framework V (for examples, see AC P0DQQ7 and AC P81755). In terms of tissue distribution, expressed by the venom duct.

The protein resides in the secreted. The chain is Conotoxin Lt5.2 from Conus litteratus (Lettered cone).